The sequence spans 689 residues: Choline transporter-like 1 (689 aa).

A helical transmembrane segment spans residues 23–43; that stretch reads IFWLVVYILFWIALLVIAVFS. N134 carries an N-linked (GlcNAc...) asparagine glycan. The next 2 helical transmembrane spans lie at 199 to 219 and 233 to 255; these read FSDI…SLIF and IISW…VLWW. An N-linked (GlcNAc...) asparagine glycan is attached at N279. A run of 2 helical transmembrane segments spans residues 283–303 and 333–353; these read IYVL…VIYY and VLAF…IVCL. 2 N-linked (GlcNAc...) asparagine glycosylation sites follow: N375 and N389. 4 consecutive transmembrane segments (helical) span residues 412 to 432, 461 to 481, 562 to 582, and 591 to 611; these read IYII…QLVI, LGSV…RLIL, LVLF…SILM, and FYMA…HIVL.

This sequence belongs to the CTL (choline transporter-like) family.

Its subcellular location is the membrane. This is Choline transporter-like 1 from Aedes aegypti (Yellowfever mosquito).